Reading from the N-terminus, the 331-residue chain is Ketol-acid reductoisomerase (NADP(+)) (331 aa).

The region spanning 2–182 (ARLYYDADAN…GGTRAGILET (181 aa)) is the KARI N-terminal Rossmann domain. NADP(+) contacts are provided by residues 25–28 (YGSQ), S51, S53, and 83–86 (DEVQ). Residue H108 is part of the active site. Position 134 (G134) interacts with NADP(+). In terms of domain architecture, KARI C-terminal knotted spans 183 to 328 (TFREETETDL…KDLRAMFSWT (146 aa)). Residues D191, E195, E227, and E231 each contribute to the Mg(2+) site. S252 is a binding site for substrate.

It belongs to the ketol-acid reductoisomerase family. Mg(2+) is required as a cofactor.

It carries out the reaction (2R)-2,3-dihydroxy-3-methylbutanoate + NADP(+) = (2S)-2-acetolactate + NADPH + H(+). The enzyme catalyses (2R,3R)-2,3-dihydroxy-3-methylpentanoate + NADP(+) = (S)-2-ethyl-2-hydroxy-3-oxobutanoate + NADPH + H(+). Its pathway is amino-acid biosynthesis; L-isoleucine biosynthesis; L-isoleucine from 2-oxobutanoate: step 2/4. It participates in amino-acid biosynthesis; L-valine biosynthesis; L-valine from pyruvate: step 2/4. Its function is as follows. Involved in the biosynthesis of branched-chain amino acids (BCAA). Catalyzes an alkyl-migration followed by a ketol-acid reduction of (S)-2-acetolactate (S2AL) to yield (R)-2,3-dihydroxy-isovalerate. In the isomerase reaction, S2AL is rearranged via a Mg-dependent methyl migration to produce 3-hydroxy-3-methyl-2-ketobutyrate (HMKB). In the reductase reaction, this 2-ketoacid undergoes a metal-dependent reduction by NADPH to yield (R)-2,3-dihydroxy-isovalerate. In Acaryochloris marina (strain MBIC 11017), this protein is Ketol-acid reductoisomerase (NADP(+)).